The sequence spans 588 residues: Pescadillo homolog (588 aa).

The BRCT domain maps to 344–437; sequence PVSTLFSDFV…KLVPANLYLP (94 aa). Disordered stretches follow at residues 446–533 and 559–588; these read SPWG…EAEE and KKEEKVENLKKKKKQISKTKEKLTKLEGKK. A compositionally biased stretch (acidic residues) spans 460–493; sequence DAEEEGEDDEDEDSEEGSGAEVEENVDEDEDDEE. Basic and acidic residues-rich tracts occupy residues 510 to 519 and 576 to 588; these read SDIKDTEVKS and KTKEKLTKLEGKK. Positions 512 to 588 form a coiled coil; the sequence is IKDTEVKSKN…EKLTKLEGKK (77 aa).

Belongs to the pescadillo family. In terms of assembly, component of the NOP7 complex, composed of ERB1, NOP7 and YTM1. The complex is held together by ERB1, which interacts with NOP7 via its N-terminal domain and with YTM1 via a high-affinity interaction between the seven-bladed beta-propeller domains of the 2 proteins. The NOP7 complex associates with the 66S pre-ribosome.

Its subcellular location is the nucleus. It is found in the nucleolus. It localises to the nucleoplasm. In terms of biological role, component of the NOP7 complex, which is required for maturation of the 25S and 5.8S ribosomal RNAs and formation of the 60S ribosome. This Vanderwaltozyma polyspora (strain ATCC 22028 / DSM 70294 / BCRC 21397 / CBS 2163 / NBRC 10782 / NRRL Y-8283 / UCD 57-17) (Kluyveromyces polysporus) protein is Pescadillo homolog.